Reading from the N-terminus, the 483-residue chain is Probable glycosyltransferase 6 (483 aa).

The Cytoplasmic portion of the chain corresponds to 1-40 (MAASETAPFGVSAASKGGGGVAGARAQHGQLAVAGRVHDA). The chain crosses the membrane as a helical; Signal-anchor for type II membrane protein span at residues 41–61 (LVFAAGAVAAVLVLLATASFL). Over 62–483 (SPMPVTNLVA…PLPFDYPAAR (422 aa)) the chain is Lumenal. Asparagine 144 carries N-linked (GlcNAc...) asparagine glycosylation.

Belongs to the glycosyltransferase 34 family.

Its subcellular location is the golgi apparatus membrane. Probable glycosyltransferase that may be involved in the biosynthesis of xyloglucan. The sequence is that of Probable glycosyltransferase 6 from Oryza sativa subsp. japonica (Rice).